The following is a 90-amino-acid chain: Mucin-like protein 1 (90 aa).

An N-terminal signal peptide occupies residues 1-20 (MKFLAVLVLLGVSIFLVSAQ). Residues Thr23, Thr24, Thr30, Thr34, Thr46, Thr47, Thr51, Thr52, Thr54, Thr55, Thr59, Thr60, Thr62, and Thr63 are each glycosylated (O-linked (GalNAc...) threonine). 2 stretches are compositionally biased toward low complexity: residues 25–36 (AAPADTYPATGP) and 44–68 (AETT…ASTT). The tract at residues 25-68 (AAPADTYPATGPADDEAPDAETTAAATTATTAAPTTATTAASTT) is disordered. 3 consecutive repeat copies span residues 46 to 53 (TTAAATTA), 54 to 61 (TTAAPTTA), and 62 to 69 (TTAASTTA). A 3 X 8 AA tandem repeat of T-T-A-A-[APS]-T-T-A region spans residues 46-69 (TTAAATTATTAAPTTATTAASTTA). Ser66 carries an O-linked (GalNAc...) serine glycan. Thr67 and Thr68 each carry an O-linked (GalNAc...) threonine glycan.

O-glycosylated. As to expression, expressed in mammary, salivary glands and prostate. Also detected in lung. Mainly expressed in cancer cell lines of breast origin. Highly expressed in lymph node-positive compared with node-negative tumors. Detected in all lymph node containing metastatic cells.

It localises to the secreted. Its subcellular location is the membrane. In terms of biological role, may play a role as marker for the diagnosis of metastatic breast cancer. The sequence is that of Mucin-like protein 1 (MUCL1) from Homo sapiens (Human).